Reading from the N-terminus, the 1477-residue chain is Putative insulin-like peptide receptor (1477 aa).

The first 24 residues, 1–24, serve as a signal peptide directing secretion; the sequence is MMRNVQSFYFLFLLIVLNFHVVLS. At 25–980 the chain is on the extracellular side; it reads AVCIGQRATT…LSVTKNNNQL (956 aa). Residues N55, N255, N300, N325, N457, N491, N549, N644, N732, N791, N874, N895, and N957 are each glycosylated (N-linked (GlcNAc...) asparagine). 2 consecutive Fibronectin type-III domains span residues 652–750 and 780–869; these read EPLG…IKAD and NKSP…IVQA. The 92-residue stretch at 880–971 folds into the Fibronectin type-III 3 domain; it reads LDSKMVRVQV…EEIHFKVAEL (92 aa). The helical transmembrane segment at 981–1001 threads the bilayer; sequence IIGIISAVSAVIVALLVFILL. The Cytoplasmic portion of the chain corresponds to 1002–1477; sequence YMFLHRKLEK…EIFYGKPIPV (476 aa). The region spanning 1044–1315 is the Protein kinase domain; the sequence is IELIRELGQG…LENEVDDDFV (272 aa). Residues 1050–1058 and K1077 contribute to the ATP site; that span reads LGQGSFGMV. D1175 functions as the Proton acceptor in the catalytic mechanism. At Y1201 the chain carries Phosphotyrosine; by autocatalysis. Disordered stretches follow at residues 1350–1376 and 1391–1421; these read YTKG…KSKE and KYDA…SNAC. Polar residues predominate over residues 1356–1368; it reads NMQNMLSRSQNRK. Basic residues predominate over residues 1403–1412; sequence KKKKRPRSKR.

Belongs to the protein kinase superfamily. Tyr protein kinase family. Insulin receptor subfamily. Mn(2+) serves as cofactor. As to expression, expressed in dividing epithelial cells.

It is found in the membrane. The enzyme catalyses L-tyrosyl-[protein] + ATP = O-phospho-L-tyrosyl-[protein] + ADP + H(+). This receptor probably binds an insulin related protein and has a tyrosine-protein kinase activity. The sequence is that of Putative insulin-like peptide receptor (HTK7) from Hydra vulgaris (Hydra).